A 1331-amino-acid polypeptide reads, in one-letter code: Probable serine/threonine-protein kinase DDB_G0272254 (1331 aa).

Low complexity-rich tracts occupy residues Met-1 to Ser-42, Asn-96 to Asn-116, and Thr-153 to Ser-175. Disordered stretches follow at residues Met-1–Ala-43, Asp-92–Ser-132, and Ile-150–Ser-175. The next 2 helical transmembrane spans lie at Phe-201–Leu-221 and Phe-224–Tyr-244. Residues Ser-259–Lys-287 are compositionally biased toward low complexity. 4 disordered regions span residues Ser-259–Tyr-300, Asn-320–Glu-419, Ser-435–Ile-464, and Ala-512–Asn-581. Residues Gly-288–Thr-299 show a composition bias toward polar residues. The segment covering Val-436–Ile-450 has biased composition (polar residues). Positions Ser-514–Asn-531 are enriched in low complexity. Residues Gln-532–Val-555 show a composition bias toward polar residues. Positions Asn-557 to Ser-577 are enriched in low complexity. Kelch repeat units lie at residues Ser-665 to Tyr-710, Lys-716 to Asn-769, Arg-770 to Ser-816, Lys-822 to Asp-868, Asn-909 to Asn-959, and Lys-962 to Asn-1008. The span at Asn-834–Asn-860 shows a compositional bias: low complexity. The tract at residues Asn-834–Gly-862 is disordered. Positions Asn-976–Asn-1042 are disordered. Residues Ile-1073–Phe-1331 form the Protein kinase domain. Residues Ile-1079 to Val-1087 and Lys-1100 each bind ATP. Catalysis depends on Asp-1200, which acts as the Proton acceptor.

Belongs to the protein kinase superfamily. TKL Ser/Thr protein kinase family.

It is found in the membrane. It catalyses the reaction L-seryl-[protein] + ATP = O-phospho-L-seryl-[protein] + ADP + H(+). The catalysed reaction is L-threonyl-[protein] + ATP = O-phospho-L-threonyl-[protein] + ADP + H(+). The sequence is that of Probable serine/threonine-protein kinase DDB_G0272254 from Dictyostelium discoideum (Social amoeba).